A 232-amino-acid chain; its full sequence is 5'-methylthioadenosine/S-adenosylhomocysteine nucleosidase (232 aa).

Catalysis depends on glutamate 12, which acts as the Proton acceptor. Residues glycine 78, isoleucine 152, and 173–174 (ME) contribute to the substrate site. The Proton donor role is filled by aspartate 197.

It belongs to the PNP/UDP phosphorylase family. MtnN subfamily. Homodimer.

The enzyme catalyses S-adenosyl-L-homocysteine + H2O = S-(5-deoxy-D-ribos-5-yl)-L-homocysteine + adenine. It carries out the reaction S-methyl-5'-thioadenosine + H2O = 5-(methylsulfanyl)-D-ribose + adenine. It catalyses the reaction 5'-deoxyadenosine + H2O = 5-deoxy-D-ribose + adenine. Its pathway is amino-acid biosynthesis; L-methionine biosynthesis via salvage pathway; S-methyl-5-thio-alpha-D-ribose 1-phosphate from S-methyl-5'-thioadenosine (hydrolase route): step 1/2. Functionally, catalyzes the irreversible cleavage of the glycosidic bond in both 5'-methylthioadenosine (MTA) and S-adenosylhomocysteine (SAH/AdoHcy) to adenine and the corresponding thioribose, 5'-methylthioribose and S-ribosylhomocysteine, respectively. Also cleaves 5'-deoxyadenosine, a toxic by-product of radical S-adenosylmethionine (SAM) enzymes, into 5-deoxyribose and adenine. Thus, is required for in vivo function of the radical SAM enzymes biotin synthase and lipoic acid synthase, that are inhibited by 5'-deoxyadenosine accumulation. This chain is 5'-methylthioadenosine/S-adenosylhomocysteine nucleosidase, found in Edwardsiella ictaluri (strain 93-146).